A 68-amino-acid chain; its full sequence is Large ribosomal subunit protein bL32 (68 aa).

Belongs to the bacterial ribosomal protein bL32 family.

The chain is Large ribosomal subunit protein bL32 from Ruegeria pomeroyi (strain ATCC 700808 / DSM 15171 / DSS-3) (Silicibacter pomeroyi).